Here is a 423-residue protein sequence, read N- to C-terminus: Histidine--tRNA ligase (423 aa).

It belongs to the class-II aminoacyl-tRNA synthetase family. Homodimer.

It localises to the cytoplasm. It catalyses the reaction tRNA(His) + L-histidine + ATP = L-histidyl-tRNA(His) + AMP + diphosphate + H(+). The sequence is that of Histidine--tRNA ligase (hisS) from Haemophilus influenzae (strain ATCC 51907 / DSM 11121 / KW20 / Rd).